A 434-amino-acid polypeptide reads, in one-letter code: F-box only protein 15 (434 aa).

Residues 1–41 (MPSEILLKIFSYLDAVSLLCAGCVSRRFYHLANDNFIWIRI) form the F-box domain.

Directly interacts with SKP1 and CUL1.

Substrate-recognition component of the SCF (SKP1-CUL1-F-box protein)-type E3 ubiquitin ligase complex. This Macaca fascicularis (Crab-eating macaque) protein is F-box only protein 15 (FBXO15).